Reading from the N-terminus, the 183-residue chain is Ribosome rescue factor SmrB (183 aa).

In terms of domain architecture, Smr spans 98-173 (LDLHGLTQLQ…GDAALLVLIE (76 aa)).

Belongs to the SmrB family. As to quaternary structure, associates with collided ribosomes, but not with correctly translating polysomes.

Its function is as follows. Acts as a ribosome collision sensor. Detects stalled/collided disomes (pairs of ribosomes where the leading ribosome is stalled and a second ribosome has collided with it) and endonucleolytically cleaves mRNA at the 5' boundary of the stalled ribosome. Stalled/collided disomes form a new interface (primarily via the 30S subunits) that binds SmrB. Cleaved mRNA becomes available for tmRNA ligation, leading to ribosomal subunit dissociation and rescue of stalled ribosomes. In Escherichia coli O157:H7, this protein is Ribosome rescue factor SmrB.